The chain runs to 270 residues: Splicing factor YJU2 (270 aa).

The interval 1-32 is disordered; the sequence is MSERKVLNKYIPPDYDPSIRPPKKKKKFQGPN. 4 residues coordinate Zn(2+): cysteine 48, cysteine 51, cysteine 84, and cysteine 87. Residues 251-270 are disordered; the sequence is PNFQPPKYAKRKMEKKKVLV. Residues 258-270 are compositionally biased toward basic residues; it reads YAKRKMEKKKVLV.

It belongs to the CWC16 family. YJU2 subfamily. As to quaternary structure, component of the spliceosome. Present in the activated B complex, the catalytically activated B* complex which catalyzes the branching, the catalytic step 1 C complex catalyzing the exon ligation, and the postcatalytic P complex containing the ligated exons (mRNA) and the excised lariat intron. Belongs to the 40S cdc5-associated complex (or cwf complex), a spliceosome sub-complex reminiscent of a late-stage spliceosome composed of the U2, U5 and U6 snRNAs and at least brr2, cdc5, cwf2/prp3, cwf3/syf1, cwf4/syf3, cwf5/ecm2, spp42/cwf6, cwf7/spf27, cwf8, cwf9, cwf10, cwf11, cwf12, prp45/cwf13, cwf14, cwf15, cwf16, cwf17, cwf18, cwf19, cwf20, cwf21, cwf22, cwf23, cwf24, cwf25, cwf26, cyp7/cwf27, cwf28, cwf29/ist3, lea1, msl1, prp5/cwf1, prp10, prp12/sap130, prp17, prp22, sap61, sap62, sap114, sap145, slu7, smb1, smd1, smd3, smf1, smg1 and syf2.

It localises to the nucleus. Its function is as follows. Part of the spliceosome which catalyzes two sequential transesterification reactions, first the excision of the non-coding intron from pre-mRNA and then the ligation of the coding exons to form the mature mRNA. Plays a role in stabilizing the structure of the spliceosome catalytic core and docking of the branch helix into the active site, producing 5'-exon and lariat intron-3'-intermediates. This is Splicing factor YJU2 (cwf16) from Schizosaccharomyces pombe (strain 972 / ATCC 24843) (Fission yeast).